Here is a 924-residue protein sequence, read N- to C-terminus: Hexokinase-3 (924 aa).

Residues 1–27 (MAAIEPSGLHPGERDSSCPQEGIPRPS) are disordered. Hexokinase domains follow at residues 27–471 (SGSL…MVTA) and 477–913 (ATHR…LVTR). Residues 84–220 (HGTEQGDFLV…TYNIDVVAMV (137 aa)) are hexokinase small subdomain 1. ATP is bound at residue 95–102 (ELGATGAS). 95 to 104 (ELGATGASLR) serves as a coordination point for D-glucose 6-phosphate. Residues S168, 185 to 186 (TK), and 221 to 222 (ND) contribute to the D-glucose site. Positions 221 to 460 (NDTVGTMMGC…CDVSFIPSVD (240 aa)) are hexokinase large subdomain 1. D222 and T245 together coordinate D-glucose 6-phosphate. Residues N248, E273, and 304-307 (QRFE) contribute to the D-glucose site. A D-glucose 6-phosphate-binding site is contributed by 426-428 (GGR). Residues 438–439 (CI) and 542–547 (DLGGTN) contribute to the ATP site. The tract at residues 531–662 (DGSERGDFLA…AVELNVVAIV (132 aa)) is hexokinase small subdomain 2. 542–546 (DLGGT) contributes to the D-glucose 6-phosphate binding site. Residues 610–611 (SF), 627–628 (TK), and 663–664 (ND) each bind D-glucose. Residues 663-902 (NDTVGTMMSC…CTVTFLQSED (240 aa)) form a hexokinase large subdomain 2 region. 2 residues coordinate D-glucose 6-phosphate: D664 and T687. T687 is an ATP binding site. D-glucose contacts are provided by residues 689-690 (TN), E715, and E749. ATP-binding positions include 754–755 (GM), 791–795 (TKFLS), and 870–874 (TLYKL). D-glucose 6-phosphate-binding positions include 868–870 (DGT) and S904.

This sequence belongs to the hexokinase family.

The enzyme catalyses a D-hexose + ATP = a D-hexose 6-phosphate + ADP + H(+). The catalysed reaction is D-fructose + ATP = D-fructose 6-phosphate + ADP + H(+). It catalyses the reaction D-glucose + ATP = D-glucose 6-phosphate + ADP + H(+). It functions in the pathway carbohydrate metabolism; hexose metabolism. It participates in carbohydrate degradation; glycolysis; D-glyceraldehyde 3-phosphate and glycerone phosphate from D-glucose: step 1/4. Its activity is regulated as follows. Hexokinase is an allosteric enzyme inhibited by its product D-glucose 6-phosphate. Its function is as follows. Catalyzes the phosphorylation of hexose, such as D-glucose and D-fructose, to hexose 6-phosphate (D-glucose 6-phosphate and D-fructose 6-phosphate, respectively). Mediates the initial step of glycolysis by catalyzing phosphorylation of D-glucose to D-glucose 6-phosphate. The polypeptide is Hexokinase-3 (Rattus norvegicus (Rat)).